The following is a 485-amino-acid chain: Ribulose bisphosphate carboxylase large chain 2 (485 aa).

Positions 124 and 174 each coordinate substrate. Lysine 176 (proton acceptor) is an active-site residue. Residue lysine 178 participates in substrate binding. 3 residues coordinate Mg(2+): lysine 202, aspartate 204, and glutamate 205. Lysine 202 bears the N6-carboxylysine mark. Histidine 294 functions as the Proton acceptor in the catalytic mechanism. Residues arginine 295, histidine 327, and serine 379 each contribute to the substrate site.

Belongs to the RuBisCO large chain family. Type I subfamily. As to quaternary structure, heterohexadecamer of 8 large chains and 8 small chains. The cofactor is Mg(2+).

It carries out the reaction 2 (2R)-3-phosphoglycerate + 2 H(+) = D-ribulose 1,5-bisphosphate + CO2 + H2O. The catalysed reaction is D-ribulose 1,5-bisphosphate + O2 = 2-phosphoglycolate + (2R)-3-phosphoglycerate + 2 H(+). Its function is as follows. RuBisCO catalyzes two reactions: the carboxylation of D-ribulose 1,5-bisphosphate, the primary event in carbon dioxide fixation, as well as the oxidative fragmentation of the pentose substrate. Both reactions occur simultaneously and in competition at the same active site. This is Ribulose bisphosphate carboxylase large chain 2 from Rhodopseudomonas palustris (strain BisB5).